The chain runs to 452 residues: Na(+)/H(+) antiporter NhaA (452 aa).

11 helical membrane passes run F27–I47, L78–I98, I114–F134, I141–L161, I172–F192, G201–A221, S222–I242, P316–A336, F346–A366, I388–L408, and I421–Y441.

It belongs to the NhaA Na(+)/H(+) (TC 2.A.33) antiporter family.

It localises to the cell inner membrane. The enzyme catalyses Na(+)(in) + 2 H(+)(out) = Na(+)(out) + 2 H(+)(in). Its function is as follows. Na(+)/H(+) antiporter that extrudes sodium in exchange for external protons. The polypeptide is Na(+)/H(+) antiporter NhaA (Bartonella bacilliformis (strain ATCC 35685 / KC583 / Herrer 020/F12,63)).